A 259-amino-acid chain; its full sequence is NADPH-dependent reductase BacG (259 aa).

Residues 12 to 15, 34 to 36, 62 to 63, isoleucine 90, lysine 113, and 185 to 191 contribute to the NADP(+) site; these read SQGI, SRN, DM, and GFIATDR.

Belongs to the short-chain dehydrogenases/reductases (SDR) family. As to quaternary structure, homodimer.

It localises to the cytoplasm. Its pathway is antibiotic biosynthesis; bacilysin biosynthesis. Along with the bacABCDEF operon, BacG is involved in the biosynthesis of the nonribosomally synthesized dipeptide antibiotic bacilysin, composed of L-alanine and L-anticapsin. Bacilysin is an irreversible inactivator of the glutaminase domain of glucosamine synthetase. BacG catalyzes the stereoselective reduction of exocyclic-delta(3),delta(5)-dihydro-hydroxyphenylpyruvate (ex-H2HPP), adding a pro-S hydride equivalent to C4 position to yield tetrahydro-hydroxyphenylpyruvate (H4HPP). Although the 3Z,7R-ex-H2HPP isomer is kinetically disfavored by BacB and produced in a smaller quantity than 3E,7R-ex-H2HPP, it is the preferred substrate for the conjugate reduction reaction of BacG. The protein is NADPH-dependent reductase BacG of Bacillus subtilis (strain 168).